The chain runs to 693 residues: Protein-glutamine gamma-glutamyltransferase E (693 aa).

Ala-2 carries the N-acetylalanine modification. Tyr-111 carries the phosphotyrosine modification. Position 112 is a phosphothreonine (Thr-112). Positions 222, 225, 227, 228, and 230 each coordinate Ca(2+). The active site involves Cys-273. The Ca(2+) site is built by Asp-302, Asp-304, Asn-306, Ser-308, and Asp-325. Residues His-331 and Asp-354 contribute to the active site. Ca(2+) contacts are provided by Asn-394, Ser-416, Glu-444, and Glu-449.

Belongs to the transglutaminase superfamily. Transglutaminase family. In terms of assembly, consists of two polypeptide chains, which are synthesized as a precursor form of a single polypeptide. It depends on Ca(2+) as a cofactor. Post-translationally, activated by proteolytic processing. In vitro activation is commonly achieved by cleavage with dispase, a neutral bacterial protease. Dispase cleavage site was proposed to lie between Ser-470 and Ser-471 or between Pro-465 and Phe-466. Physiological activation may be catalyzed by CTSL and, to a lesser extent, by CTSS, but not by CTSB, CTSD nor CTSV.

It localises to the cytoplasm. It catalyses the reaction L-glutaminyl-[protein] + L-lysyl-[protein] = [protein]-L-lysyl-N(6)-5-L-glutamyl-[protein] + NH4(+). Functionally, catalyzes the calcium-dependent formation of isopeptide cross-links between glutamine and lysine residues in various proteins, as well as the conjugation of polyamines to proteins. Involved in the formation of the cornified envelope (CE), a specialized component consisting of covalent cross-links of proteins beneath the plasma membrane of terminally differentiated keratinocytes. Catalyzes small proline-rich proteins (SPRR1 and SPRR2) and LOR cross-linking to form small interchain oligomers, which are further cross-linked by TGM1 onto the growing CE scaffold. In hair follicles, involved in cross-linking structural proteins to hardening the inner root sheath. The sequence is that of Protein-glutamine gamma-glutamyltransferase E (TGM3) from Homo sapiens (Human).